Reading from the N-terminus, the 538-residue chain is Phosphoenolpyruvate carboxykinase (ATP) (538 aa).

Substrate is bound by residues R61, Y195, and K201. ATP is bound by residues K201, H220, and 236 to 244; that span reads GLSGTGKTT. Residues K201 and H220 each coordinate Mn(2+). Residue D257 coordinates Mn(2+). The ATP site is built by E285, R323, and T449. Residue R323 coordinates substrate.

It belongs to the phosphoenolpyruvate carboxykinase (ATP) family. Requires Mn(2+) as cofactor.

It is found in the cytoplasm. It catalyses the reaction oxaloacetate + ATP = phosphoenolpyruvate + ADP + CO2. The protein operates within carbohydrate biosynthesis; gluconeogenesis. Functionally, involved in the gluconeogenesis. Catalyzes the conversion of oxaloacetate (OAA) to phosphoenolpyruvate (PEP) through direct phosphoryl transfer between the nucleoside triphosphate and OAA. This Afipia carboxidovorans (strain ATCC 49405 / DSM 1227 / KCTC 32145 / OM5) (Oligotropha carboxidovorans) protein is Phosphoenolpyruvate carboxykinase (ATP).